Reading from the N-terminus, the 408-residue chain is LL-diaminopimelate aminotransferase (408 aa).

2 residues coordinate substrate: Tyr-15 and Gly-42. Residues Tyr-72, 108-109, Tyr-132, Asn-187, Tyr-218, and 246-248 contribute to the pyridoxal 5'-phosphate site; these read SK and SFS. Residues Lys-109, Tyr-132, and Asn-187 each coordinate substrate. Lys-249 carries the post-translational modification N6-(pyridoxal phosphate)lysine. Residues Arg-257 and Asn-292 each contribute to the pyridoxal 5'-phosphate site. Residues Asn-292 and Arg-388 each contribute to the substrate site.

Belongs to the class-I pyridoxal-phosphate-dependent aminotransferase family. LL-diaminopimelate aminotransferase subfamily. As to quaternary structure, homodimer. Pyridoxal 5'-phosphate serves as cofactor.

It carries out the reaction (2S,6S)-2,6-diaminopimelate + 2-oxoglutarate = (S)-2,3,4,5-tetrahydrodipicolinate + L-glutamate + H2O + H(+). It participates in amino-acid biosynthesis; L-lysine biosynthesis via DAP pathway; LL-2,6-diaminopimelate from (S)-tetrahydrodipicolinate (aminotransferase route): step 1/1. Its function is as follows. Involved in the synthesis of meso-diaminopimelate (m-DAP or DL-DAP), required for both lysine and peptidoglycan biosynthesis. Catalyzes the direct conversion of tetrahydrodipicolinate to LL-diaminopimelate. The sequence is that of LL-diaminopimelate aminotransferase from Prochlorococcus marinus (strain MIT 9303).